Consider the following 166-residue polypeptide: Ribosome biogenesis regulatory protein homolog (166 aa).

A phosphoserine mark is found at Ser34 and Ser64. The interval 144–166 (KEKKLTSKQVRNTSKKIKRSRRH) is disordered. The segment covering 156–166 (TSKKIKRSRRH) has biased composition (basic residues).

It belongs to the RRS1 family. As to quaternary structure, component of a hexameric 5S RNP precursor complex, composed of 5S RNA, rrs1, rpf2, rpl5a/rpl5b, rpl11a/rpl11b and syo1; this complex acts as a precursor for ribosome assembly. Interacts with sad1.

The protein resides in the nucleus. It is found in the nucleolus. Functionally, involved in ribosomal large subunit assembly. The sequence is that of Ribosome biogenesis regulatory protein homolog from Schizosaccharomyces pombe (strain 972 / ATCC 24843) (Fission yeast).